Here is a 216-residue protein sequence, read N- to C-terminus: ATP phosphoribosyltransferase (216 aa).

Belongs to the ATP phosphoribosyltransferase family. Short subfamily. In terms of assembly, heteromultimer composed of HisG and HisZ subunits.

The protein localises to the cytoplasm. The catalysed reaction is 1-(5-phospho-beta-D-ribosyl)-ATP + diphosphate = 5-phospho-alpha-D-ribose 1-diphosphate + ATP. It participates in amino-acid biosynthesis; L-histidine biosynthesis; L-histidine from 5-phospho-alpha-D-ribose 1-diphosphate: step 1/9. In terms of biological role, catalyzes the condensation of ATP and 5-phosphoribose 1-diphosphate to form N'-(5'-phosphoribosyl)-ATP (PR-ATP). Has a crucial role in the pathway because the rate of histidine biosynthesis seems to be controlled primarily by regulation of HisG enzymatic activity. This Nitrosomonas europaea (strain ATCC 19718 / CIP 103999 / KCTC 2705 / NBRC 14298) protein is ATP phosphoribosyltransferase.